The sequence spans 486 residues: MIRRVLPHGLGRGLLTRRPGTRRGGFSLDWDGKVSEIKKKIKSILPGTPCDVLPDTSHLPPEHSDVVVVGGGVLGLSVAYWLKQLENRRGGMRVLVVERDHTYSQASTGLSVGGICQQFSLPENIQLSLFSASFLRNINEYLAVTNAPPLDLQFNPSGYLLLASEKDAAAMESNVKVQKQEGAKVCLMSPDQLRNKFPWINTEGVALASYGMENEGWFDPWCLLHGLRQKLMSMGVFFCQGEVTRFVTSSQRMMTTDDEMVTLKSIHEVHVKMDHSLEYQPVECAIVINAAGAWSAQIAALAGIGKGPPGTLQGTKLPVEPRKRYVYVWHCPQGPGLETPLVADTSGAYFRREGLGSNYLGGRSPAEEEEPDPANLEVDHDFFQEKVWPHLALRVPAFETLKVQTAWAGYYDYNTFDQNGVVGPHPLVVNMYFATGFSGHGLQQAPGVGRAVAEMILEGSFQTIDLSPFLFNRFYLGEKTQENNIM.

Residues 66-86 traverse the membrane as a helical segment; sequence VVVVGGGVLGLSVAYWLKQLE.

Associates with components of the mitochondrial respiratory chain complex I. FAD is required as a cofactor.

It is found in the mitochondrion inner membrane. Its function is as follows. Required for the assembly of the mitochondrial membrane respiratory chain NADH dehydrogenase (Complex I). Involved in mid-late stages of complex I assembly. The sequence is that of FAD-dependent oxidoreductase domain-containing protein 1 (FOXRED1) from Macaca fascicularis (Crab-eating macaque).